A 433-amino-acid polypeptide reads, in one-letter code: 4-hydroxy-3-methylbut-2-en-1-yl diphosphate synthase (flavodoxin) (433 aa).

Positions 1–13 are enriched in polar residues; sequence MNKPETVTENSLA. Residues 1 to 23 are disordered; the sequence is MNKPETVTENSLASDVAGPAPRH. Cys-314, Cys-317, Cys-360, and Glu-367 together coordinate [4Fe-4S] cluster.

This sequence belongs to the IspG family. [4Fe-4S] cluster serves as cofactor.

The enzyme catalyses (2E)-4-hydroxy-3-methylbut-2-enyl diphosphate + oxidized [flavodoxin] + H2O + 2 H(+) = 2-C-methyl-D-erythritol 2,4-cyclic diphosphate + reduced [flavodoxin]. Its pathway is isoprenoid biosynthesis; isopentenyl diphosphate biosynthesis via DXP pathway; isopentenyl diphosphate from 1-deoxy-D-xylulose 5-phosphate: step 5/6. Its function is as follows. Converts 2C-methyl-D-erythritol 2,4-cyclodiphosphate (ME-2,4cPP) into 1-hydroxy-2-methyl-2-(E)-butenyl 4-diphosphate. This Bradyrhizobium sp. (strain ORS 278) protein is 4-hydroxy-3-methylbut-2-en-1-yl diphosphate synthase (flavodoxin).